The sequence spans 242 residues: ATP synthase subunit a (242 aa).

The next 6 helical transmembrane spans lie at 29-49 (SSIY…LAFY), 84-104 (FIPL…LGMT), 114-134 (IIVT…VGFV), 140-160 (FLTL…MIVI), 189-209 (VIAG…IPLM), and 210-230 (VILI…FTIL).

This sequence belongs to the ATPase A chain family. In terms of assembly, F-type ATPases have 2 components, CF(1) - the catalytic core - and CF(0) - the membrane proton channel. CF(1) has five subunits: alpha(3), beta(3), gamma(1), delta(1), epsilon(1). CF(0) has three main subunits: a(1), b(2) and c(9-12). The alpha and beta chains form an alternating ring which encloses part of the gamma chain. CF(1) is attached to CF(0) by a central stalk formed by the gamma and epsilon chains, while a peripheral stalk is formed by the delta and b chains.

Its subcellular location is the cell inner membrane. Its function is as follows. Key component of the proton channel; it plays a direct role in the translocation of protons across the membrane. This chain is ATP synthase subunit a, found in Rickettsia felis (strain ATCC VR-1525 / URRWXCal2) (Rickettsia azadi).